Reading from the N-terminus, the 156-residue chain is Small ribosomal subunit protein uS7 (156 aa).

Belongs to the universal ribosomal protein uS7 family. Part of the 30S ribosomal subunit. Contacts proteins S9 and S11.

Functionally, one of the primary rRNA binding proteins, it binds directly to 16S rRNA where it nucleates assembly of the head domain of the 30S subunit. Is located at the subunit interface close to the decoding center, probably blocks exit of the E-site tRNA. The polypeptide is Small ribosomal subunit protein uS7 (Neisseria gonorrhoeae (strain ATCC 700825 / FA 1090)).